A 206-amino-acid chain; its full sequence is N-(5'-phosphoribosyl)anthranilate isomerase (206 aa).

It belongs to the TrpF family.

It carries out the reaction N-(5-phospho-beta-D-ribosyl)anthranilate = 1-(2-carboxyphenylamino)-1-deoxy-D-ribulose 5-phosphate. It functions in the pathway amino-acid biosynthesis; L-tryptophan biosynthesis; L-tryptophan from chorismate: step 3/5. The sequence is that of N-(5'-phosphoribosyl)anthranilate isomerase from Chlamydia felis (strain Fe/C-56) (Chlamydophila felis).